A 91-amino-acid chain; its full sequence is uncharacterized protein (91 aa).

It is found in the plastid. Its subcellular location is the chloroplast. This is an uncharacterized protein from Phalaenopsis aphrodite subsp. formosana (Moth orchid).